The sequence spans 550 residues: Hydroxylamine reductase (550 aa).

[2Fe-2S] cluster-binding residues include Cys-3, Cys-6, Cys-18, and Cys-25. His-249, Glu-273, Cys-317, Cys-405, Cys-433, Cys-458, Glu-492, and Lys-494 together coordinate hybrid [4Fe-2O-2S] cluster. Cys-405 carries the post-translational modification Cysteine persulfide.

It belongs to the HCP family. The cofactor is [2Fe-2S] cluster. It depends on hybrid [4Fe-2O-2S] cluster as a cofactor.

It is found in the cytoplasm. It carries out the reaction A + NH4(+) + H2O = hydroxylamine + AH2 + H(+). Functionally, catalyzes the reduction of hydroxylamine to form NH(3) and H(2)O. The protein is Hydroxylamine reductase of Shigella flexneri serotype 5b (strain 8401).